Here is a 385-residue protein sequence, read N- to C-terminus: Spindle pole component BBP1 (385 aa).

Phosphoserine is present on Ser-29. Residues 34–48 (YKDQEERRDRSRYAQ) show a composition bias toward basic and acidic residues. The disordered stretch occupies residues 34-76 (YKDQEERRDRSRYAQDDTNFSMKFGNDSNRRSTNLSRSNSWSG). The span at 64-75 (RSTNLSRSNSWS) shows a compositional bias: low complexity. A phosphoserine mark is found at Ser-73 and Ser-115. The stretch at 229–355 (QMDLNSRDLE…KDMQRDNYES (127 aa)) forms a coiled coil.

The protein belongs to the BBP1 family. As to quaternary structure, homodimer. Interacts with KAR1, MPS2 and SPC29.

The protein localises to the cytoplasm. Its subcellular location is the cytoskeleton. The protein resides in the microtubule organizing center. It localises to the spindle pole body. Component of the spindle pole body (SPB) required for insertion of the nascent SPB into the nuclear envelope and for the proper execution of spindle pole body (SPB) duplication. Connects the central plaque of the SPB with the half-bridge. Required for proper localization of CDC5 at the SPB and for proper M-phase progression. The sequence is that of Spindle pole component BBP1 (BBP1) from Saccharomyces cerevisiae (strain ATCC 204508 / S288c) (Baker's yeast).